Consider the following 101-residue polypeptide: Urease subunit beta (101 aa).

This sequence belongs to the urease beta subunit family. In terms of assembly, heterotrimer of UreA (gamma), UreB (beta) and UreC (alpha) subunits. Three heterotrimers associate to form the active enzyme.

It localises to the cytoplasm. The enzyme catalyses urea + 2 H2O + H(+) = hydrogencarbonate + 2 NH4(+). It participates in nitrogen metabolism; urea degradation; CO(2) and NH(3) from urea (urease route): step 1/1. The polypeptide is Urease subunit beta (Rhodopseudomonas palustris (strain ATCC BAA-98 / CGA009)).